Consider the following 444-residue polypeptide: Transmembrane protein with metallophosphoesterase domain (444 aa).

5 consecutive transmembrane segments (helical) span residues 7–27, 43–63, 87–107, 114–134, and 162–182; these read LSLG…MIVS, LFRL…SIYI, MVVA…IFLV, FSLV…FLCV, and LALR…VGLL. A divalent metal cation-binding residues include Asp-214, His-216, Asp-246, Asn-277, His-382, and His-384.

This sequence belongs to the metallophosphoesterase superfamily. LOC643853 family. The cofactor is a divalent metal cation.

The protein resides in the membrane. The sequence is that of Transmembrane protein with metallophosphoesterase domain (TMPPE) from Bos taurus (Bovine).